The primary structure comprises 470 residues: 3-isopropylmalate dehydratase large subunit (470 aa).

The [4Fe-4S] cluster site is built by cysteine 351, cysteine 411, and cysteine 414.

Belongs to the aconitase/IPM isomerase family. LeuC type 1 subfamily. Heterodimer of LeuC and LeuD. The cofactor is [4Fe-4S] cluster.

It carries out the reaction (2R,3S)-3-isopropylmalate = (2S)-2-isopropylmalate. It functions in the pathway amino-acid biosynthesis; L-leucine biosynthesis; L-leucine from 3-methyl-2-oxobutanoate: step 2/4. Its function is as follows. Catalyzes the isomerization between 2-isopropylmalate and 3-isopropylmalate, via the formation of 2-isopropylmaleate. This is 3-isopropylmalate dehydratase large subunit from Rhodopseudomonas palustris (strain BisA53).